We begin with the raw amino-acid sequence, 567 residues long: Laccase-3 (567 aa).

An N-terminal signal peptide occupies residues 1 to 24 (MASSSSSRLLFLLSCSVLALLAGA). 2 Plastocyanin-like domains span residues 32–148 (IVQE…PREN) and 158–310 (REVP…YDCG). N78 carries N-linked (GlcNAc...) asparagine glycosylation. Residues H82, H84, H127, and H129 each contribute to the Cu cation site. N-linked (GlcNAc...) asparagine glycans are attached at residues N148, N187, N203, N298, N330, N379, and N389. One can recognise a Plastocyanin-like 3 domain in the interval 415-551 (DFPAYPPVQF…AMAFLVEDGY (137 aa)). 7 residues coordinate Cu cation: H468, H471, H473, H530, C531, H532, and H536.

It belongs to the multicopper oxidase family. Cu cation serves as cofactor.

It is found in the secreted. The protein localises to the extracellular space. It localises to the apoplast. The catalysed reaction is 4 hydroquinone + O2 = 4 benzosemiquinone + 2 H2O. Lignin degradation and detoxification of lignin-derived products. The protein is Laccase-3 (LAC3) of Oryza sativa subsp. japonica (Rice).